A 423-amino-acid polypeptide reads, in one-letter code: Adenosylmethionine-8-amino-7-oxononanoate aminotransferase (423 aa).

Residue Trp-51 participates in substrate binding. Residue 111–112 (GS) coordinates pyridoxal 5'-phosphate. A substrate-binding site is contributed by Tyr-144. Position 243 (Asp-243) interacts with pyridoxal 5'-phosphate. The substrate site is built by Lys-272 and Gly-306. Lys-272 bears the N6-(pyridoxal phosphate)lysine mark. Position 307 to 308 (307 to 308 (PT)) interacts with pyridoxal 5'-phosphate. Arg-390 serves as a coordination point for substrate.

It belongs to the class-III pyridoxal-phosphate-dependent aminotransferase family. BioA subfamily. In terms of assembly, homodimer. Requires pyridoxal 5'-phosphate as cofactor.

It is found in the cytoplasm. The catalysed reaction is (8S)-8-amino-7-oxononanoate + S-adenosyl-L-methionine = S-adenosyl-4-methylsulfanyl-2-oxobutanoate + (7R,8S)-7,8-diammoniononanoate. It functions in the pathway cofactor biosynthesis; biotin biosynthesis; 7,8-diaminononanoate from 8-amino-7-oxononanoate (SAM route): step 1/1. In terms of biological role, catalyzes the transfer of the alpha-amino group from S-adenosyl-L-methionine (SAM) to 7-keto-8-aminopelargonic acid (KAPA) to form 7,8-diaminopelargonic acid (DAPA). It is the only aminotransferase known to utilize SAM as an amino donor. In Corynebacterium glutamicum (strain ATCC 13032 / DSM 20300 / JCM 1318 / BCRC 11384 / CCUG 27702 / LMG 3730 / NBRC 12168 / NCIMB 10025 / NRRL B-2784 / 534), this protein is Adenosylmethionine-8-amino-7-oxononanoate aminotransferase.